Consider the following 460-residue polypeptide: Pyruvate dehydrogenase E1 component subunit beta (460 aa).

The Lipoyl-binding domain occupies 2 to 78 (PVEILMPALS…KVNTPIAVLL (77 aa)). An N6-lipoyllysine modification is found at K43. Residues 91-131 (KTEAPKAETPKPAAAEAPAASAAPVAAQPKADVPSDPAIPA) form a disordered region. A compositionally biased stretch (low complexity) spans 100–121 (PKPAAAEAPAASAAPVAAQPKA). E194 provides a ligand contact to thiamine diphosphate.

In terms of assembly, heterodimer of an alpha and a beta chain. It depends on (R)-lipoate as a cofactor. The cofactor is thiamine diphosphate.

The enzyme catalyses N(6)-[(R)-lipoyl]-L-lysyl-[protein] + pyruvate + H(+) = N(6)-[(R)-S(8)-acetyldihydrolipoyl]-L-lysyl-[protein] + CO2. The pyruvate dehydrogenase complex catalyzes the overall conversion of pyruvate to acetyl-CoA and CO(2). It contains multiple copies of three enzymatic components: pyruvate dehydrogenase (E1), dihydrolipoamide acetyltransferase (E2) and lipoamide dehydrogenase (E3). This Rhizobium meliloti (strain 1021) (Ensifer meliloti) protein is Pyruvate dehydrogenase E1 component subunit beta (pdhB).